Reading from the N-terminus, the 95-residue chain is MIGKEATIPDIVLELQQLVQPTDLHCYEELSEEETETEEEPRRIPYKIVAPCCFCGSKLRLIVLATHAGIRSQEELLLGEVQLVCPNCREKLRHD.

Residues 1–40 form an E7 terminal domain region; it reads MIGKEATIPDIVLELQQLVQPTDLHCYEELSEEETETEEE. Positions 24-28 match the LXCXE motif; interaction with host RB1 and TMEM173/STING motif; that stretch reads LHCYE. Residues 52–88 fold into a zinc finger; the sequence is CCFCGSKLRLIVLATHAGIRSQEELLLGEVQLVCPNC. The Nuclear export signal motif lies at 70-78; it reads IRSQEELLL.

Belongs to the papillomaviridae E7 protein family. As to quaternary structure, homodimer. Homooligomer. Interacts with host RB1; this interaction induces dissociation of RB1-E2F1 complex thereby disrupting RB1 activity. Interacts with host EP300; this interaction represses EP300 transcriptional activity. Interacts with protein E2; this interaction inhibits E7 oncogenic activity. Interacts with host TMEM173/STING; this interaction impairs the ability of TMEM173/STING to sense cytosolic DNA and promote the production of type I interferon (IFN-alpha and IFN-beta). Highly phosphorylated.

Its subcellular location is the host cytoplasm. It localises to the host nucleus. In terms of biological role, plays a role in viral genome replication by driving entry of quiescent cells into the cell cycle. Stimulation of progression from G1 to S phase allows the virus to efficiently use the cellular DNA replicating machinery to achieve viral genome replication. E7 protein has both transforming and trans-activating activities. Induces the disassembly of the E2F1 transcription factor from RB1, with subsequent transcriptional activation of E2F1-regulated S-phase genes. Interferes with host histone deacetylation mediated by HDAC1 and HDAC2, leading to transcription activation. Also plays a role in the inhibition of both antiviral and antiproliferative functions of host interferon alpha. Interaction with host TMEM173/STING impairs the ability of TMEM173/STING to sense cytosolic DNA and promote the production of type I interferon (IFN-alpha and IFN-beta). This is Protein E7 from Human papillomavirus 17.